Here is a 257-residue protein sequence, read N- to C-terminus: Phosphatidylglycerol--prolipoprotein diacylglyceryl transferase (257 aa).

The next 7 helical transmembrane spans lie at 13–33, 49–69, 88–108, 123–143, 152–172, 185–202, and 223–243; these read IGPI…AIGG, FLLN…RLMF, IYEG…AGLY, FAVL…IFNQ, FAFG…ILLI, GYQF…RGLI, and IGFF…AYWM. An a 1,2-diacyl-sn-glycero-3-phospho-(1'-sn-glycerol)-binding site is contributed by Arg136.

This sequence belongs to the Lgt family.

It is found in the cell membrane. The enzyme catalyses L-cysteinyl-[prolipoprotein] + a 1,2-diacyl-sn-glycero-3-phospho-(1'-sn-glycerol) = an S-1,2-diacyl-sn-glyceryl-L-cysteinyl-[prolipoprotein] + sn-glycerol 1-phosphate + H(+). Its pathway is protein modification; lipoprotein biosynthesis (diacylglyceryl transfer). Functionally, catalyzes the transfer of the diacylglyceryl group from phosphatidylglycerol to the sulfhydryl group of the N-terminal cysteine of a prolipoprotein, the first step in the formation of mature lipoproteins. The polypeptide is Phosphatidylglycerol--prolipoprotein diacylglyceryl transferase (Thermoanaerobacter pseudethanolicus (strain ATCC 33223 / 39E) (Clostridium thermohydrosulfuricum)).